The chain runs to 143 residues: Monothiol glutaredoxin-5, mitochondrial (143 aa).

Residues 1-28 (MFGRISTRALLRPAFTHRIPSVSLSRFL) constitute a mitochondrion transit peptide. Residues 33 to 138 (KQAIESAIES…KLLEDADALV (106 aa)) form the Glutaredoxin domain. K50 is a glutathione binding site. Position 58 (C58) interacts with [2Fe-2S] cluster. Residues 90–94 (REGVK), I102, and 115–116 (CD) each bind glutathione.

Belongs to the glutaredoxin family. Monothiol subfamily. In terms of assembly, homodimer.

It is found in the mitochondrion matrix. Its function is as follows. Monothiol glutaredoxin involved in mitochondrial iron-sulfur (Fe/S) cluster transfer. Receives iron-sulfur clusters from scaffold protein ISU1 and mediates their transfer to apoproteins, to the 4Fe/FS cluster biosynthesis machinery, or export from mitochondrion. The protein is Monothiol glutaredoxin-5, mitochondrial (GRX5) of Lachancea kluyveri (Yeast).